A 122-amino-acid chain; its full sequence is Large ribosomal subunit protein uL18 (122 aa).

Belongs to the universal ribosomal protein uL18 family. Part of the 50S ribosomal subunit; part of the 5S rRNA/L5/L18/L25 subcomplex. Contacts the 5S and 23S rRNAs.

In terms of biological role, this is one of the proteins that bind and probably mediate the attachment of the 5S RNA into the large ribosomal subunit, where it forms part of the central protuberance. This chain is Large ribosomal subunit protein uL18, found in Citrifermentans bemidjiense (strain ATCC BAA-1014 / DSM 16622 / JCM 12645 / Bem) (Geobacter bemidjiensis).